Consider the following 530-residue polypeptide: MGIVEPGCGDMLTGTEPMPSDEGRGPGADQQHRFFYPEPGAQDPTDRRAGSSLGTPYSGGALVPAAPGRFLGSFAYPPRAQVAGFPGPGEFFPPPAGAEGYPPVDGYPAPDPRAGLYPGPREDYALPAGLEVSGKLRVALSNHLLWSKFNQHQTEMIITKQGRRMFPFLSFTVAGLEPTSHYRMFVDVVLVDQHHWRYQSGKWVQCGKAEGSMPGNRLYVHPDSPNTGAHWMRQEVSFGKLKLTNNKGASNNVTQMIVLQSLHKYQPRLHIVEVNDGEPEAACSASNTHVFTFQETQFIAVTAYQNAEITQLKIDNNPFAKGFRENFESMYASVDTSVPSPPGPNCQLLGGDPFSPLLSNQYPVPSRFYPDLPGQPKDMISQPYWLGTPREHSYEAEFRAVSMKPTLLPSAPGPTVPYYRGQDVLAPGAGWPVAPQYPPKMSPAGWFRPMRTLPMDPGLGSSEEQGSSPSLWPEVTSLQPEPSDSGLGEGDTKRRRISPYPSSGDSSSPAGAPSPFDKETEGQFYNYFPN.

The tract at residues 1 to 55 (MGIVEPGCGDMLTGTEPMPSDEGRGPGADQQHRFFYPEPGAQDPTDRRAGSSLGT) is disordered. At Ser-52 the chain carries Phosphoserine. Phosphothreonine is present on Thr-55. Phosphotyrosine occurs at positions 76 and 117. Positions 140–325 (LSNHLLWSKF…NNPFAKGFRE (186 aa)) form a DNA-binding region, T-box. Tyr-219 carries the post-translational modification Phosphotyrosine; by ABL1. Ser-224 bears the Phosphoserine mark. Tyr-265 is modified (phosphotyrosine; by ABL1). The residue at position 302 (Thr-302) is a Phosphothreonine. Tyr-304 is subject to Phosphotyrosine; by ABL1. Residue Lys-313 forms a Glycyl lysine isopeptide (Lys-Gly) (interchain with G-Cter in ubiquitin) linkage. The interval 444–530 (AGWFRPMRTL…EGQFYNYFPN (87 aa)) is disordered. Positions 462 to 482 (SEEQGSSPSLWPEVTSLQPEP) are enriched in polar residues. Low complexity predominate over residues 498–515 (SPYPSSGDSSSPAGAPSP). The residue at position 508 (Ser-508) is a Phosphoserine. At Tyr-525 the chain carries Phosphotyrosine; by ITK.

As to quaternary structure, interacts with RUNX1 and RUNX3. Interacts with ITK. The phosphorylated form (at Tyr-525) interacts with GATA3. Interacts with ABL1. Interacts with RELA. The phosphorylated form (at Thr-302) interacts with NFATC2. Interacts with KDM6B. Interacts with SMARCA4 in a KDM6B-dependent manner. Interacts with CCTN1 and CDK9. Interacts with USP10. In terms of processing, phosphorylations at Ser-52, Tyr-76, Ser-224 and Ser-508 are regulated by mTORC1. Phosphorylation at Tyr-525 is essential for its interaction GATA3. Phosphorylation at Tyr-219, Tyr-265 and Tyr-304 enhances its transcriptional activator activity. Phosphorylation at Thr-302 is required for its interaction with NFATC2. Post-translationally, ubiquitinated at Lys-313, leading to its degradation by the proteasome. Ubiquitination is essential for controlling protein stability, binding to the T-box-binding element of the IFN-gamma promoter, and for interaction with NFATC2 through induction of phosphorylation at Thr-302. Deubiquitinated by USP10 leading to its stabilization. As to expression, T-cell specific. Expressed in regulatory T (TReg) cells.

It is found in the nucleus. In terms of biological role, lineage-defining transcription factor which initiates Th1 lineage development from naive Th precursor cells both by activating Th1 genetic programs and by repressing the opposing Th2 and Th17 genetic programs. Activates transcription of a set of genes important for Th1 cell function, including those encoding IFN-gamma and the chemokine receptor CXCR3. Activates IFNG and CXCR3 genes in part by recruiting chromatin remodeling complexes including KDM6B, a SMARCA4-containing SWI/SNF-complex, and an H3K4me2-methyltransferase complex to their promoters and all of these complexes serve to establish a more permissive chromatin state conducive with transcriptional activation. Can activate Th1 genes also via recruitment of Mediator complex and P-TEFb (composed of CDK9 and CCNT1/cyclin-T1) in the form of the super elongation complex (SEC) to super-enhancers and associated genes in activated Th1 cells. Inhibits the Th17 cell lineage commitment by blocking RUNX1-mediated transactivation of Th17 cell-specific transcriptinal regulator RORC. Inhibits the Th2 cell lineage commitment by suppressing the production of Th2 cytokines, such as IL-4, IL-5, and IL- 13, via repression of transcriptional regulators GATA3 and NFATC2. Protects Th1 cells from amplifying aberrant type-I IFN response in an IFN-gamma abundant microenvironment by acting as a repressor of type-I IFN transcription factors and type-I IFN- stimulated genes. Acts as a regulator of antiviral B-cell responses; controls chronic viral infection by promoting the antiviral antibody IgG2a isotype switching and via regulation of a broad antiviral gene expression program. The chain is T-box transcription factor TBX21 (Tbx21) from Mus musculus (Mouse).